Consider the following 199-residue polypeptide: MEKFSTHCGVGAPLKQSNVDTDQIIPAVYLKRITKTGFDDALFAGWRRDPEFVLNRPEYEGASVLVAGSDFGTGSSREHAVWALRDYGFRVVISSRFADIFRGNSGKQGLLAAQVEQSDVELLWKLMEEQPGVELEVDLESRTVACGGVGVPFQIDDYTRWRLMEGLDDIGLTLQHEEDIEAYEGARPSFKPTTLPARS.

Belongs to the LeuD family. LeuD type 1 subfamily. As to quaternary structure, heterodimer of LeuC and LeuD.

It carries out the reaction (2R,3S)-3-isopropylmalate = (2S)-2-isopropylmalate. It participates in amino-acid biosynthesis; L-leucine biosynthesis; L-leucine from 3-methyl-2-oxobutanoate: step 2/4. Catalyzes the isomerization between 2-isopropylmalate and 3-isopropylmalate, via the formation of 2-isopropylmaleate. The protein is 3-isopropylmalate dehydratase small subunit of Kocuria rhizophila (strain ATCC 9341 / DSM 348 / NBRC 103217 / DC2201).